The following is an 833-amino-acid chain: Major vault protein (833 aa).

8 MVP repeats span residues 10–52, 54–115, 119–170, 171–223, 224–278, 280–328, 329–380, and 381–433; these read RYYY…VSVP, RHYC…RKLQ, PNTG…TVIY, PNTA…TMLS, ELKA…VSLN, KEYV…LVVG, KEEA…MALD, and RNEG…SIKT.

In terms of assembly, the vault ribonucleoprotein particle is a huge (400 A x 670 A) cage structure of 12.9 MDa. It consists of a dimer of half-vaults, with each half-vault comprising 39 identical major vault protein (MVP) chains, PARP4 and one or more vault RNAs (vRNAs).

The protein resides in the cytoplasm. It is found in the nucleus. Its function is as follows. Required for normal vault structure. Vaults are multi-subunit structures that may act as scaffolds for proteins involved in signal transduction. Vaults may also play a role in nucleo-cytoplasmic transport. In Leishmania braziliensis, this protein is Major vault protein.